The chain runs to 471 residues: tRNA-2-methylthio-N(6)-dimethylallyladenosine synthase (471 aa).

One can recognise an MTTase N-terminal domain in the interval 31–149 (LYYHIETYGC…FPQLLWEALN (119 aa)). 6 residues coordinate [4Fe-4S] cluster: C40, C76, C110, C186, C190, and C193. Residues 172-402 (RDSNLKAWVN…IELQNKISLE (231 aa)) form the Radical SAM core domain. Positions 405–468 (AELRGKIVEV…AWTMQGELVE (64 aa)) constitute a TRAM domain.

This sequence belongs to the methylthiotransferase family. MiaB subfamily. As to quaternary structure, monomer. [4Fe-4S] cluster serves as cofactor.

It localises to the cytoplasm. It catalyses the reaction N(6)-dimethylallyladenosine(37) in tRNA + (sulfur carrier)-SH + AH2 + 2 S-adenosyl-L-methionine = 2-methylsulfanyl-N(6)-dimethylallyladenosine(37) in tRNA + (sulfur carrier)-H + 5'-deoxyadenosine + L-methionine + A + S-adenosyl-L-homocysteine + 2 H(+). In terms of biological role, catalyzes the methylthiolation of N6-(dimethylallyl)adenosine (i(6)A), leading to the formation of 2-methylthio-N6-(dimethylallyl)adenosine (ms(2)i(6)A) at position 37 in tRNAs that read codons beginning with uridine. This chain is tRNA-2-methylthio-N(6)-dimethylallyladenosine synthase, found in Thermoanaerobacter sp. (strain X514).